The sequence spans 349 residues: Isopentenyl-diphosphate delta-isomerase (349 aa).

Residue 6–7 (RK) participates in substrate binding. FMN-binding positions include 62–64 (AMT), serine 93, and asparagine 122. Residue glutamine 152 participates in substrate binding. Glutamate 153 provides a ligand contact to Mg(2+). FMN-binding positions include lysine 184, threonine 214, 258–259 (GG), and 280–281 (AG).

This sequence belongs to the IPP isomerase type 2 family. Homooctamer. Dimer of tetramers. The cofactor is FMN. NADPH serves as cofactor. It depends on Mg(2+) as a cofactor.

It localises to the cytoplasm. The enzyme catalyses isopentenyl diphosphate = dimethylallyl diphosphate. In terms of biological role, involved in the biosynthesis of isoprenoids. Catalyzes the 1,3-allylic rearrangement of the homoallylic substrate isopentenyl (IPP) to its allylic isomer, dimethylallyl diphosphate (DMAPP). This Bacillus cereus (strain ATCC 10987 / NRS 248) protein is Isopentenyl-diphosphate delta-isomerase.